We begin with the raw amino-acid sequence, 250 residues long: 3-deoxy-manno-octulosonate cytidylyltransferase (250 aa).

Belongs to the KdsB family.

The protein localises to the cytoplasm. The catalysed reaction is 3-deoxy-alpha-D-manno-oct-2-ulosonate + CTP = CMP-3-deoxy-beta-D-manno-octulosonate + diphosphate. Its pathway is nucleotide-sugar biosynthesis; CMP-3-deoxy-D-manno-octulosonate biosynthesis; CMP-3-deoxy-D-manno-octulosonate from 3-deoxy-D-manno-octulosonate and CTP: step 1/1. It functions in the pathway bacterial outer membrane biogenesis; lipopolysaccharide biosynthesis. Activates KDO (a required 8-carbon sugar) for incorporation into bacterial lipopolysaccharide in Gram-negative bacteria. The protein is 3-deoxy-manno-octulosonate cytidylyltransferase of Yersinia pseudotuberculosis serotype O:1b (strain IP 31758).